We begin with the raw amino-acid sequence, 229 residues long: Ribose-5-phosphate isomerase A (229 aa).

Residues 28–31 (TGST), 85–88 (DGAD), and 98–101 (KGRG) each bind substrate. Residue Glu-107 is the Proton acceptor of the active site. Lys-125 provides a ligand contact to substrate.

It belongs to the ribose 5-phosphate isomerase family. As to quaternary structure, homotetramer.

It carries out the reaction aldehydo-D-ribose 5-phosphate = D-ribulose 5-phosphate. Its pathway is carbohydrate degradation; pentose phosphate pathway; D-ribose 5-phosphate from D-ribulose 5-phosphate (non-oxidative stage): step 1/1. Inhibited by D-4-phosphoerythronic acid. Functionally, involved in the first step of the non-oxidative branch of the pentose phosphate pathway. It catalyzes the reversible conversion of ribose-5-phosphate to ribulose 5-phosphate. The chain is Ribose-5-phosphate isomerase A from Pyrococcus horikoshii (strain ATCC 700860 / DSM 12428 / JCM 9974 / NBRC 100139 / OT-3).